The primary structure comprises 164 residues: UPF0304 protein ECA3037 (164 aa).

This sequence belongs to the UPF0304 family.

The chain is UPF0304 protein ECA3037 from Pectobacterium atrosepticum (strain SCRI 1043 / ATCC BAA-672) (Erwinia carotovora subsp. atroseptica).